A 249-amino-acid polypeptide reads, in one-letter code: tRNA pseudouridine synthase A (249 aa).

The Nucleophile role is filled by Asp-54. Tyr-111 contacts substrate.

This sequence belongs to the tRNA pseudouridine synthase TruA family. As to quaternary structure, homodimer.

It carries out the reaction uridine(38/39/40) in tRNA = pseudouridine(38/39/40) in tRNA. Functionally, formation of pseudouridine at positions 38, 39 and 40 in the anticodon stem and loop of transfer RNAs. The polypeptide is tRNA pseudouridine synthase A (Mycoplasma capricolum subsp. capricolum (strain California kid / ATCC 27343 / NCTC 10154)).